The chain runs to 355 residues: MAPVTDTGIGLLCLCRQGFEPELAGELQFRAGEAGFAGYARTQRNDGYVLFMCDEAAALAPRLRWRELIFARQKLVVLAELPQLDPADRITPMLDVLADAPRFGDLWVEHPDSDAGKPLSGLARAFGNALRPALRKAGKLTDKPNNRLPRLHVVFVDGTHAFVCVADPADSAPWALGIPRLKLLPEAPSRSALKLDEALLTLLMPEEREALAKPGMRAADLGAAPGGWTWVLTRQHMHVLSIDNGPLRQHVLDTGLVEHLRADGFHWHPEQPLDWMVCDMVEQPRRVAERMATWFREGWCRHAIFNLKLPMKKRWDETRLCLDLFQDQAGKPLVVRAKQLYHDREEITVLASPLR.

S-adenosyl-L-methionine contacts are provided by residues S191, 224-227 (APGG), D243, D263, and D279. The active-site Proton acceptor is the K308.

The protein belongs to the class I-like SAM-binding methyltransferase superfamily. RNA methyltransferase RlmE family. RlmM subfamily. In terms of assembly, monomer.

It localises to the cytoplasm. The catalysed reaction is cytidine(2498) in 23S rRNA + S-adenosyl-L-methionine = 2'-O-methylcytidine(2498) in 23S rRNA + S-adenosyl-L-homocysteine + H(+). Its function is as follows. Catalyzes the 2'-O-methylation at nucleotide C2498 in 23S rRNA. The chain is Ribosomal RNA large subunit methyltransferase M from Stenotrophomonas maltophilia (strain K279a).